The primary structure comprises 253 residues: Probable transcriptional regulatory protein SynRCC307_1833 (253 aa).

The protein belongs to the TACO1 family.

The protein resides in the cytoplasm. In Synechococcus sp. (strain RCC307), this protein is Probable transcriptional regulatory protein SynRCC307_1833.